The sequence spans 475 residues: UDP-N-acetylmuramate--L-alanine ligase (475 aa).

112-118 (GTHGKTT) lines the ATP pocket.

Belongs to the MurCDEF family.

Its subcellular location is the cytoplasm. The enzyme catalyses UDP-N-acetyl-alpha-D-muramate + L-alanine + ATP = UDP-N-acetyl-alpha-D-muramoyl-L-alanine + ADP + phosphate + H(+). Its pathway is cell wall biogenesis; peptidoglycan biosynthesis. Functionally, cell wall formation. In Cupriavidus pinatubonensis (strain JMP 134 / LMG 1197) (Cupriavidus necator (strain JMP 134)), this protein is UDP-N-acetylmuramate--L-alanine ligase.